Consider the following 147-residue polypeptide: 3-dehydroquinate dehydratase 2 (147 aa).

Tyr23 (proton acceptor) is an active-site residue. Substrate-binding residues include Asn74, His80, and Asp87. The Proton donor role is filled by His100. Substrate is bound by residues 101–102 and Arg111; that span reads IS.

Belongs to the type-II 3-dehydroquinase family. Homododecamer.

It catalyses the reaction 3-dehydroquinate = 3-dehydroshikimate + H2O. It functions in the pathway metabolic intermediate biosynthesis; chorismate biosynthesis; chorismate from D-erythrose 4-phosphate and phosphoenolpyruvate: step 3/7. Catalyzes a trans-dehydration via an enolate intermediate. This Agrobacterium fabrum (strain C58 / ATCC 33970) (Agrobacterium tumefaciens (strain C58)) protein is 3-dehydroquinate dehydratase 2 (aroQ2).